We begin with the raw amino-acid sequence, 165 residues long: Crossover junction endodeoxyribonuclease RuvC (165 aa).

Catalysis depends on residues D7, E67, and D140. Positions 7, 67, and 140 each coordinate Mg(2+).

Belongs to the RuvC family. Homodimer which binds Holliday junction (HJ) DNA. The HJ becomes 2-fold symmetrical on binding to RuvC with unstacked arms; it has a different conformation from HJ DNA in complex with RuvA. In the full resolvosome a probable DNA-RuvA(4)-RuvB(12)-RuvC(2) complex forms which resolves the HJ. Mg(2+) serves as cofactor.

The protein resides in the cytoplasm. The catalysed reaction is Endonucleolytic cleavage at a junction such as a reciprocal single-stranded crossover between two homologous DNA duplexes (Holliday junction).. The RuvA-RuvB-RuvC complex processes Holliday junction (HJ) DNA during genetic recombination and DNA repair. Endonuclease that resolves HJ intermediates. Cleaves cruciform DNA by making single-stranded nicks across the HJ at symmetrical positions within the homologous arms, yielding a 5'-phosphate and a 3'-hydroxyl group; requires a central core of homology in the junction. The consensus cleavage sequence is 5'-(A/T)TT(C/G)-3'. Cleavage occurs on the 3'-side of the TT dinucleotide at the point of strand exchange. HJ branch migration catalyzed by RuvA-RuvB allows RuvC to scan DNA until it finds its consensus sequence, where it cleaves and resolves the cruciform DNA. The protein is Crossover junction endodeoxyribonuclease RuvC of Dehalococcoides mccartyi (strain ATCC BAA-2266 / KCTC 15142 / 195) (Dehalococcoides ethenogenes (strain 195)).